The chain runs to 366 residues: MEKVVCIGCGVTIQTEDKTGLGYAPPASLTKENVICQRCFRLKNYNEIQDVSLTDDDFLNILHGIGETDSLVVKIVDIFDFNGSWINGLQRLVGGNPILLVGNKADILPKSLKRERLIQWMKREAKELGLKPVDVFLVSAGRGQGIREVIDAIEHYRNGKDVYVVGCTNVGKSTFINRIIKEVSGEEDIITTSQFPGTTLDAIEIPLDDGSSLYDTPGIINNHQMAHYVNKKDLKILSPKKELKPRTFQLNDQQTLYFGGLARFDYVSGERSPFICYMPNELMIHRTKLENADALYEKHAGELLTPPGKDEMDEFPELVAHTFTIKDKKTDIVFSGLGWVTVHDADKKVTAYAPKGVHVFVRRSLI.

The CP-type G domain occupies 59 to 222 (LNILHGIGET…LYDTPGIINN (164 aa)).

Belongs to the TRAFAC class YlqF/YawG GTPase family.

Binds GTP and GDP. This is an uncharacterized protein from Bacillus subtilis (strain 168).